Consider the following 209-residue polypeptide: Lipopolysaccharide export system protein LptC (209 aa).

The helical transmembrane segment at 7–26 (NIRWNVILGVIALCALAWFY) threads the bilayer.

It belongs to the LptC family. In terms of assembly, component of the lipopolysaccharide transport and assembly complex. Interacts with LptA and the LptBFG transporter complex.

Its subcellular location is the cell inner membrane. Its function is as follows. Involved in the assembly of lipopolysaccharide (LPS). Required for the translocation of LPS from the inner membrane to the outer membrane. Facilitates the transfer of LPS from the inner membrane to the periplasmic protein LptA. Could be a docking site for LptA. The chain is Lipopolysaccharide export system protein LptC from Haemophilus influenzae (strain ATCC 51907 / DSM 11121 / KW20 / Rd).